The following is an 874-amino-acid chain: Cellulose synthase catalytic subunit [UDP-forming] (874 aa).

A run of 4 helical transmembrane segments spans residues 30–50 (SPFSAALGCLWTILAWIVFPL), 151–171 (ILGVIVTFSLILALICITQPF), 173–193 (PLSQFIFLLLLWGVALLVRRM), and 230–250 (LVCGLILLFAETYAWIVLVLG). The tract at residues 271–364 (QWPTVDIFVP…FVAIFDCDHV (94 aa)) is catalytic subdomain A. Asp313 is a catalytic residue. Substrate-binding residues include Asp360 and Asp362. A catalytic subdomain B region spans residues 441–501 (KPLDEIGGIA…GQRIRWARGM (61 aa)). Asp457 is a catalytic residue. A run of 5 helical transmembrane segments spans residues 525-545 (LNAMFHFLSGIPRLIFLTAPL), 547-567 (FLLLHAYIIYAPALMIALFVI), 592-612 (IYETVLAWYIAPPTLVALINP), 634-654 (VISRPYIFLVLLNLLGVAAGV), and 668-688 (VIVSLVWVFYNLVILGGAVAV). Residues 694 to 790 (QVRRAHRVEI…QHIDFVQCTF (97 aa)) form the PilZ domain. The chain crosses the membrane as a helical span at residues 833-853 (SVKVIFRSLTALIAWIVSFIP).

The protein belongs to the glycosyltransferase 2 family. The cofactor is Mg(2+).

The protein localises to the cell inner membrane. The enzyme catalyses [(1-&gt;4)-beta-D-glucosyl](n) + UDP-alpha-D-glucose = [(1-&gt;4)-beta-D-glucosyl](n+1) + UDP + H(+). The protein operates within glycan metabolism; bacterial cellulose biosynthesis. Its activity is regulated as follows. Activated by bis-(3'-5') cyclic diguanylic acid (c-di-GMP). Functionally, catalytic subunit of cellulose synthase. It polymerizes uridine 5'-diphosphate glucose to cellulose, which is produced as an extracellular component for mechanical and chemical protection at the onset of the stationary phase, when the cells exhibit multicellular behavior (rdar morphotype). Coexpression of cellulose and thin aggregative fimbriae leads to a hydrophobic network with tightly packed cells embedded in a highly inert matrix. This Salmonella typhimurium (strain LT2 / SGSC1412 / ATCC 700720) protein is Cellulose synthase catalytic subunit [UDP-forming] (bcsA).